The following is a 129-amino-acid chain: uncharacterized protein (129 aa).

The span at 1–13 (MSDVAETVVAQEP) shows a compositional bias: low complexity. The interval 1-129 (MSDVAETVVA…SGDAPAVAAE (129 aa)) is disordered. Residues 34 to 94 (IDEKTSEQNG…KRVSSAHEEA (61 aa)) are compositionally biased toward basic and acidic residues. Residues 117–129 (VAASGDAPAVAAE) show a composition bias toward low complexity.

This is an uncharacterized protein from Caenorhabditis elegans.